We begin with the raw amino-acid sequence, 220 residues long: Charged multivesicular body protein 3 (220 aa).

Gly-2 is lipidated: N-myristoyl glycine. A coiled-coil region spans residues 22 to 54 (KIRKEMRVIDRQIRDIQREQEKVKRSIKESAKK). Residues 168 to 169 (IL) are important for autoinhibitory function. The interval 196–220 (AMAASDEEEEEDLEAMQSRLAALRS) is disordered. Positions 197–220 (MAASDEEEEEDLEAMQSRLAALRS) form a coiled coil. The span at 200–209 (SDEEEEEDLE) shows a compositional bias: acidic residues. The short motif at 201 to 209 (DEEEEEDLE) is the MIT-interacting motif element. Interaction with STAMBP regions lie at residues 203 to 207 (EEEED) and 219 to 220 (RS).

It belongs to the SNF7 family. As to quaternary structure, probable core component of the endosomal sorting required for transport complex III (ESCRT-III). ESCRT-III components are thought to multimerize to form a flat lattice on the perimeter membrane of the endosome. Several assembly forms of ESCRT-III may exist that interact and act sequentially.

The protein resides in the cytoplasm. Its subcellular location is the cytosol. It localises to the membrane. It is found in the endosome. The protein localises to the late endosome membrane. In terms of biological role, probable core component of the endosomal sorting required for transport complex III (ESCRT-III) which is involved in multivesicular bodies (MVBs) formation and sorting of endosomal cargo proteins into MVBs. MVBs contain intraluminal vesicles (ILVs) that are generated by invagination and scission from the limiting membrane of the endosome and mostly are delivered to lysosomes enabling degradation of membrane proteins, such as stimulated growth factor receptors, lysosomal enzymes and lipids. Involved in late stages of cytokinesis. Plays a role in endosomal sorting/trafficking of EGF receptor. This Xenopus tropicalis (Western clawed frog) protein is Charged multivesicular body protein 3 (chmp3).